We begin with the raw amino-acid sequence, 344 residues long: S-methyl-5'-thioadenosine phosphorylase (344 aa).

Residues T45, 88–89 (RH), and 121–122 (SA) each bind phosphate. M238 is a substrate binding site. S239 lines the phosphate pocket. Substrate is bound at residue 262 to 264 (DYD).

Belongs to the PNP/MTAP phosphorylase family. MTAP subfamily. In terms of assembly, homotrimer.

Its subcellular location is the cytoplasm. It is found in the nucleus. It carries out the reaction S-methyl-5'-thioadenosine + phosphate = 5-(methylsulfanyl)-alpha-D-ribose 1-phosphate + adenine. It functions in the pathway amino-acid biosynthesis; L-methionine biosynthesis via salvage pathway; S-methyl-5-thio-alpha-D-ribose 1-phosphate from S-methyl-5'-thioadenosine (phosphorylase route): step 1/1. In terms of biological role, catalyzes the reversible phosphorylation of S-methyl-5'-thioadenosine (MTA) to adenine and 5-methylthioribose-1-phosphate. Involved in the breakdown of MTA, a major by-product of polyamine biosynthesis. Responsible for the first step in the methionine salvage pathway after MTA has been generated from S-adenosylmethionine. Has broad substrate specificity with 6-aminopurine nucleosides as preferred substrates. The chain is S-methyl-5'-thioadenosine phosphorylase from Candida albicans (strain SC5314 / ATCC MYA-2876) (Yeast).